Here is a 404-residue protein sequence, read N- to C-terminus: Probable tRNA sulfurtransferase (404 aa).

The THUMP domain occupies 60–165 (QPIVEALKLV…DEAAYISYEE (106 aa)). ATP is bound by residues 183–184 (ML), 208–209 (HF), Arg265, Gly287, and Gln296.

The protein belongs to the ThiI family.

The protein localises to the cytoplasm. It catalyses the reaction [ThiI sulfur-carrier protein]-S-sulfanyl-L-cysteine + a uridine in tRNA + 2 reduced [2Fe-2S]-[ferredoxin] + ATP + H(+) = [ThiI sulfur-carrier protein]-L-cysteine + a 4-thiouridine in tRNA + 2 oxidized [2Fe-2S]-[ferredoxin] + AMP + diphosphate. The catalysed reaction is [ThiS sulfur-carrier protein]-C-terminal Gly-Gly-AMP + S-sulfanyl-L-cysteinyl-[cysteine desulfurase] + AH2 = [ThiS sulfur-carrier protein]-C-terminal-Gly-aminoethanethioate + L-cysteinyl-[cysteine desulfurase] + A + AMP + 2 H(+). The protein operates within cofactor biosynthesis; thiamine diphosphate biosynthesis. Catalyzes the ATP-dependent transfer of a sulfur to tRNA to produce 4-thiouridine in position 8 of tRNAs, which functions as a near-UV photosensor. Also catalyzes the transfer of sulfur to the sulfur carrier protein ThiS, forming ThiS-thiocarboxylate. This is a step in the synthesis of thiazole, in the thiamine biosynthesis pathway. The sulfur is donated as persulfide by IscS. This is Probable tRNA sulfurtransferase from Streptococcus pyogenes serotype M49 (strain NZ131).